The primary structure comprises 331 residues: Isopenicillin N synthase (331 aa).

Residues R87, Y91, S183, and Y189 each coordinate isopenicillin N. 6 residues coordinate N-[(5S)-5-amino-5-carboxypentanoyl]-L-cysteinyl-D-valine: R87, Y91, S183, Y189, H214, and D216. In terms of domain architecture, Fe2OG dioxygenase spans 176-288 (KKEDALSSVV…RQSLPFFVNL (113 aa)). Fe(2+)-binding residues include H214, D216, and H270. R279 is a binding site for 2-oxoglutarate. Residue S281 coordinates isopenicillin N. S281 provides a ligand contact to N-[(5S)-5-amino-5-carboxypentanoyl]-L-cysteinyl-D-valine.

The protein belongs to the iron/ascorbate-dependent oxidoreductase family. In terms of assembly, monomer. Requires Fe(2+) as cofactor.

The protein resides in the cytoplasm. It is found in the cytosol. It carries out the reaction N-[(5S)-5-amino-5-carboxypentanoyl]-L-cysteinyl-D-valine + O2 = isopenicillin N + 2 H2O. It functions in the pathway antibiotic biosynthesis; penicillin G biosynthesis; penicillin G from L-alpha-aminoadipate and L-cysteine and L-valine: step 2/3. In terms of biological role, isopenicillin N synthase; part of the gene cluster that mediates the biosynthesis of penicillin, the world's most important antibiotic. IpnA catalyzes the cyclization of the tripeptide N-[(5S)-5-amino-5-carboxypentanoyl]-L-cysteinyl-D-valine (LLD-ACV or ACV) to form isopenicillin N (IPN) that contains the beta-lactam nucleus. The penicillin biosynthesis occurs via 3 enzymatic steps, the first corresponding to the production of the tripeptide N-[(5S)-5-amino-5-carboxypentanoyl]-L-cysteinyl-D-valine (LLD-ACV or ACV) by the NRPS acvA. The tripeptide ACV is then cyclized to isopenicillin N (IPN) by the isopenicillin N synthase ipnA that forms the beta-lactam nucleus. Finally, the alpha-aminoadipyl side chain is exchanged for phenylacetic acid by the isopenicillin N acyltransferase aatA to yield penicillin in the peroxisomal matrix. This is Isopenicillin N synthase from Penicillium chrysogenum (Penicillium notatum).